The primary structure comprises 1204 residues: Bromodomain and PHD finger-containing protein 3 (1204 aa).

Disordered stretches follow at residues 1–27 (MRKP…KCSP) and 76–127 (SNKE…TGSQ). The span at 89-99 (KSKKPSSKGKR) shows a compositional bias: basic residues. Residues 212–262 (DAFCCVCLDDECHNSNVILFCDICNLAVHQECYGVPYIPEGQWLCRCCLQS) form a PHD-type 1 zinc finger. Residues 266-299 (PVDCVLCPNKGGAFKQTSDGHWAHVVCAIWIPEV) form a C2HC pre-PHD-type zinc finger. The segment at 323–387 (LTCYICKQKG…RKTAYCEAHS (65 aa)) adopts a PHD-type 2 zinc-finger fold. The interval 393-464 (ARRKGDSPRS…KKEPEEAGRE (72 aa)) is disordered. 2 positions are modified to phosphoserine: Ser-399 and Ser-402. Residues 417-429 (GEEEQEEAEEEGQ) are compositionally biased toward acidic residues. Residues 442–454 (VSKKGKMSLKQKI) show a composition bias toward basic residues. Lys-445, Lys-447, and Lys-670 each carry N6-acetyllysine. Positions 588–692 (LELMPFTVLL…DLGGAILRHA (105 aa)) constitute a Bromo domain. Phosphoserine occurs at positions 712 and 739. The interval 778–879 (RQKLAQPPPP…FLKSRKVEDE (102 aa)) is disordered. Residues 816 to 826 (QQEEPEEEGDR) are compositionally biased toward acidic residues. Ser-899, Ser-961, and Ser-964 each carry phosphoserine. The segment at 903–1015 (IDRLSLTNPD…ESGSDSECSL (113 aa)) is disordered. The segment covering 979 to 990 (SCSDSEGERSPQ) has biased composition (basic and acidic residues). The region spanning 1075 to 1158 (PLELVWAKCR…RDKVLPLGVE (84 aa)) is the PWWP domain.

In terms of assembly, component of some HBO1 complexes composed of KAT7/HBO1, MEAF6, ING4 or ING5, and BRPF3. Component of the MOZ/MORF complex composed at least of ING5, KAT6A, KAT6B, MEAF6 and one of BRPF1, BRD1/BRPF2 and BRPF3. Interacts with KAT7/HBO1; the interaction is direct. As to expression, highly expressed in the adult testis and brain.

It localises to the nucleus. Its function is as follows. Scaffold subunit of various histone acetyltransferase (HAT) complexes, such as the MOZ/MORF and HBO1 complexes, which have a histone H3 acetyltransferase activity. Plays a role in DNA replication initiation by directing KAT7/HBO1 specificity towards histone H3 'Lys-14' acetylation (H3K14ac), thereby facilitating the activation of replication origins. Component of the MOZ/MORF complex which has a histone H3 acetyltransferase activity. This is Bromodomain and PHD finger-containing protein 3 from Mus musculus (Mouse).